The following is a 141-amino-acid chain: Nucleoside diphosphate kinase (141 aa).

Positions 11, 59, 87, 93, 104, and 114 each coordinate ATP. Catalysis depends on His117, which acts as the Pros-phosphohistidine intermediate.

Belongs to the NDK family. Homotetramer. Mg(2+) is required as a cofactor.

The protein localises to the cytoplasm. It catalyses the reaction a 2'-deoxyribonucleoside 5'-diphosphate + ATP = a 2'-deoxyribonucleoside 5'-triphosphate + ADP. It carries out the reaction a ribonucleoside 5'-diphosphate + ATP = a ribonucleoside 5'-triphosphate + ADP. Functionally, major role in the synthesis of nucleoside triphosphates other than ATP. The ATP gamma phosphate is transferred to the NDP beta phosphate via a ping-pong mechanism, using a phosphorylated active-site intermediate. This Methylibium petroleiphilum (strain ATCC BAA-1232 / LMG 22953 / PM1) protein is Nucleoside diphosphate kinase.